Consider the following 718-residue polypeptide: U-box domain-containing protein 5 (718 aa).

In terms of domain architecture, U-box spans 218-292 (TLPEKFKCTL…SEWCAKNGLD (75 aa)). 3 ARM repeats span residues 493–532 (PHGP…NLSS), 534–571 (MEIC…NLCS), and 573–613 (EKGR…QLCV). The tract at residues 662–704 (KEEEEEVSSRPEGRTTASPTSQVVTPVTHPEPVKITPSPKKSG) is disordered. Over residues 676 to 686 (TTASPTSQVVT) the composition is skewed to polar residues.

It carries out the reaction S-ubiquitinyl-[E2 ubiquitin-conjugating enzyme]-L-cysteine + [acceptor protein]-L-lysine = [E2 ubiquitin-conjugating enzyme]-L-cysteine + N(6)-ubiquitinyl-[acceptor protein]-L-lysine.. It participates in protein modification; protein ubiquitination. Functionally, functions as an E3 ubiquitin ligase. This chain is U-box domain-containing protein 5 (PUB5), found in Arabidopsis thaliana (Mouse-ear cress).